Here is a 446-residue protein sequence, read N- to C-terminus: DNA repair protein RadA (446 aa).

The segment at 10 to 27 adopts a C4-type zinc-finger fold; it reads CQACGNQQSKWLGKCPDC. 96-103 provides a ligand contact to ATP; that stretch reads GSPGVGKS. A RadA KNRFG motif motif is present at residues 253 to 257; it reads KNRFG. Positions 349 to 446 are lon-protease-like; that stretch reads DVFVNISGGV…KELSQVLEWM (98 aa).

It belongs to the RecA family. RadA subfamily.

In terms of biological role, DNA-dependent ATPase involved in processing of recombination intermediates, plays a role in repairing DNA breaks. Stimulates the branch migration of RecA-mediated strand transfer reactions, allowing the 3' invading strand to extend heteroduplex DNA faster. Binds ssDNA in the presence of ADP but not other nucleotides, has ATPase activity that is stimulated by ssDNA and various branched DNA structures, but inhibited by SSB. Does not have RecA's homology-searching function. The sequence is that of DNA repair protein RadA from Campylobacter jejuni subsp. jejuni serotype O:2 (strain ATCC 700819 / NCTC 11168).